Reading from the N-terminus, the 418-residue chain is Equilibrative nucleotide transporter 6 (418 aa).

Helical transmembrane passes span 19-39 (AMIV…SMLT), 56-76 (VLTL…AYHE), 86-106 (LIGY…DLAT), 112-132 (FGPY…DATV), 142-162 (LMCP…GALT), 186-206 (MFLA…AYVL), 264-284 (HAVN…GFLY), 291-311 (GLGA…DLVG), 326-346 (KLIT…YFTA), 353-373 (WMIM…VCIM), and 392-412 (LVIF…LWLI).

Belongs to the SLC29A/ENT transporter (TC 2.A.57) family. As to expression, expressed in leaves and siliques.

It is found in the cell membrane. Functionally, nucleoside transporter that can mediate uptake of adenosine, uridine, guanosine or cytidine when expressed in a heterologous system (yeast). The sequence is that of Equilibrative nucleotide transporter 6 (ENT6) from Arabidopsis thaliana (Mouse-ear cress).